The following is a 726-amino-acid chain: Probable dipeptidyl-peptidase 5 (726 aa).

A signal peptide spans 1 to 19 (MGALQWLSITAAAASAVSA). Asn-97, Asn-153, Asn-259, Asn-398, Asn-453, and Asn-529 each carry an N-linked (GlcNAc...) asparagine glycan. Ser-564 functions as the Charge relay system in the catalytic mechanism. N-linked (GlcNAc...) asparagine glycosylation is present at Asn-611. Residues Asp-647 and His-679 each act as charge relay system in the active site.

It belongs to the peptidase S9C family.

It localises to the secreted. In terms of biological role, extracellular dipeptidyl-peptidase which removes N-terminal dipeptides sequentially from polypeptides having unsubstituted N-termini. This is Probable dipeptidyl-peptidase 5 (dpp5) from Aspergillus niger.